The primary structure comprises 338 residues: DNA-directed RNA polymerase subunit alpha (338 aa).

An alpha N-terminal domain (alpha-NTD) region spans residues Met1–Glu234. The alpha C-terminal domain (alpha-CTD) stretch occupies residues Phe250–Ile338.

It belongs to the RNA polymerase alpha chain family. In terms of assembly, homodimer. The RNAP catalytic core consists of 2 alpha, 1 beta, 1 beta' and 1 omega subunit. When a sigma factor is associated with the core the holoenzyme is formed, which can initiate transcription.

The enzyme catalyses RNA(n) + a ribonucleoside 5'-triphosphate = RNA(n+1) + diphosphate. Functionally, DNA-dependent RNA polymerase catalyzes the transcription of DNA into RNA using the four ribonucleoside triphosphates as substrates. In Caulobacter sp. (strain K31), this protein is DNA-directed RNA polymerase subunit alpha.